The primary structure comprises 190 residues: Peptidyl-prolyl cis-trans isomerase A (190 aa).

Residues 1-23 (MSKRILAAVVTVLSLTAFSPAFA) form the signal peptide. Residues 26–187 (TSTHVLLTTS…KPIVIQSAKI (162 aa)) enclose the PPIase cyclophilin-type domain.

Belongs to the cyclophilin-type PPIase family.

Its subcellular location is the periplasm. The catalysed reaction is [protein]-peptidylproline (omega=180) = [protein]-peptidylproline (omega=0). Its function is as follows. PPIases accelerate the folding of proteins. It catalyzes the cis-trans isomerization of proline imidic peptide bonds in oligopeptides. This chain is Peptidyl-prolyl cis-trans isomerase A (rotA), found in Dickeya dadantii (strain 3937) (Erwinia chrysanthemi (strain 3937)).